Reading from the N-terminus, the 203-residue chain is MQNLILYAVSYLLGSIPSGLILAKIFGHVDIKKEGSKSIGATNVLRVLKQTNPKLAKKLAILTVVCDVLKGVLPLIVASFLGASQSVLWTMAVLSVAGHCFSIFLGFQGGKGVATGAGVLAFFLPVEIIIALVVWFLVGKFLKISSLASLCALIALIASSFIIHPELDEIYTHAPILIIAFLVVYKHIPNIVRLLSGKEQKVV.

Helical transmembrane passes span 3-23, 61-81, 87-107, 118-138, 144-164, and 172-192; these read NLIL…LILA, ILTV…ASFL, VLWT…FLGF, GVLA…WFLV, ISSL…FIIH, and THAP…PNIV.

This sequence belongs to the PlsY family. In terms of assembly, probably interacts with PlsX.

Its subcellular location is the cell inner membrane. It catalyses the reaction an acyl phosphate + sn-glycerol 3-phosphate = a 1-acyl-sn-glycero-3-phosphate + phosphate. Its pathway is lipid metabolism; phospholipid metabolism. Functionally, catalyzes the transfer of an acyl group from acyl-phosphate (acyl-PO(4)) to glycerol-3-phosphate (G3P) to form lysophosphatidic acid (LPA). This enzyme utilizes acyl-phosphate as fatty acyl donor, but not acyl-CoA or acyl-ACP. This Campylobacter concisus (strain 13826) protein is Glycerol-3-phosphate acyltransferase.